We begin with the raw amino-acid sequence, 412 residues long: Argininosuccinate synthase (412 aa).

Residue alanine 10–serine 18 participates in ATP binding. Tyrosine 89 is an L-citrulline binding site. Residue glycine 119 coordinates ATP. Residues threonine 121, asparagine 125, and aspartate 126 each coordinate L-aspartate. Asparagine 125 contributes to the L-citrulline binding site. L-citrulline contacts are provided by arginine 129, serine 177, glutamate 261, and tyrosine 273.

It belongs to the argininosuccinate synthase family. Type 1 subfamily. In terms of assembly, homotetramer.

It is found in the cytoplasm. It catalyses the reaction L-citrulline + L-aspartate + ATP = 2-(N(omega)-L-arginino)succinate + AMP + diphosphate + H(+). It functions in the pathway amino-acid biosynthesis; L-arginine biosynthesis; L-arginine from L-ornithine and carbamoyl phosphate: step 2/3. The sequence is that of Argininosuccinate synthase from Bifidobacterium longum subsp. infantis (strain ATCC 15697 / DSM 20088 / JCM 1222 / NCTC 11817 / S12).